The sequence spans 434 residues: Putative ankyrin repeat protein FPV219 (434 aa).

ANK repeat units follow at residues 33 to 62 (DDLSPLHHAVSRGYKEIVISMLEHGADVNL), 66 to 95 (EVCSPLHIAIKNDNVEMVQLLIDNGADTDC), 101 to 131 (HGTPLQCAILNENYRITDALLESGADTHEIY), 132 to 161 (TKNHPIIEAIKLDNLPLVRLLLRHGADVNT), 165 to 195 (LYGYPIHLAIRYGNIDIIKELLYHGVIESYS), 196 to 225 (LYPSLLHQSIMCNNKEVVLLLISMGFDVNA), and 229 to 258 (EGNTPMHLAVQKNLVGIVKILLDKGADTSI).

The chain is Putative ankyrin repeat protein FPV219 from Fowlpox virus (strain NVSL) (FPV).